The primary structure comprises 202 residues: LexA repressor (202 aa).

Residues 28-48 constitute a DNA-binding region (H-T-H motif); the sequence is RAEIAQRLGFRSPNAAEEHLK. Active-site for autocatalytic cleavage activity residues include serine 119 and lysine 156.

It belongs to the peptidase S24 family. Homodimer.

It catalyses the reaction Hydrolysis of Ala-|-Gly bond in repressor LexA.. In terms of biological role, represses a number of genes involved in the response to DNA damage (SOS response), including recA and lexA. Binds to the 16 bp palindromic sequence 5'-CTGTATATATATACAG-3'. In the presence of single-stranded DNA, RecA interacts with LexA causing an autocatalytic cleavage which disrupts the DNA-binding part of LexA, leading to derepression of the SOS regulon and eventually DNA repair. This Escherichia fergusonii (strain ATCC 35469 / DSM 13698 / CCUG 18766 / IAM 14443 / JCM 21226 / LMG 7866 / NBRC 102419 / NCTC 12128 / CDC 0568-73) protein is LexA repressor.